A 243-amino-acid polypeptide reads, in one-letter code: tRNA (guanine-N(1)-)-methyltransferase (243 aa).

S-adenosyl-L-methionine contacts are provided by residues G108 and 127–132 (LGDFVL).

It belongs to the RNA methyltransferase TrmD family. As to quaternary structure, homodimer.

It is found in the cytoplasm. The catalysed reaction is guanosine(37) in tRNA + S-adenosyl-L-methionine = N(1)-methylguanosine(37) in tRNA + S-adenosyl-L-homocysteine + H(+). Functionally, specifically methylates guanosine-37 in various tRNAs. The chain is tRNA (guanine-N(1)-)-methyltransferase from Streptococcus equi subsp. zooepidemicus (strain H70).